Consider the following 506-residue polypeptide: AMP phosphorylase (506 aa).

Residues Gly167, 193 to 198, and Thr202 each bind AMP; that span reads SRAITG. Asp255 functions as the Proton donor in the catalytic mechanism. AMP is bound by residues Ser263 and Lys287.

This sequence belongs to the thymidine/pyrimidine-nucleoside phosphorylase family. Type 2 subfamily.

The catalysed reaction is AMP + phosphate = alpha-D-ribose 1,5-bisphosphate + adenine. It catalyses the reaction CMP + phosphate = cytosine + alpha-D-ribose 1,5-bisphosphate. The enzyme catalyses UMP + phosphate = alpha-D-ribose 1,5-bisphosphate + uracil. Functionally, catalyzes the conversion of AMP and phosphate to adenine and ribose 1,5-bisphosphate (R15P). Exhibits phosphorylase activity toward CMP and UMP in addition to AMP. Functions in an archaeal AMP degradation pathway, together with R15P isomerase and RubisCO. This Methanosarcina barkeri (strain Fusaro / DSM 804) protein is AMP phosphorylase.